Consider the following 141-residue polypeptide: Calcium-binding protein SPEC 2D (141 aa).

4 EF-hand domains span residues 10-42 (DQIK…MKSV), 43-72 (GHVL…AMIL), 73-107 (DKKC…FDRQ), and 108-141 (ITED…MNFC). D23, N25, D27, and N29 together coordinate Ca(2+). Positions 84, 86, 90, 95, 121, 125, 127, and 132 each coordinate Ca(2+).

Found in cell lineages giving rise to the aboral ectoderm, a squamous epithelium covering the surface of the late stage embryo and larva.

Its function is as follows. Calcium-binding protein involved in larval development and metamorphosis. Likely to function as calcium buffers mediating the transport of calcium from the sea water to the blastocoel where calcium is required for skeleton formation. The polypeptide is Calcium-binding protein SPEC 2D (SPEC2D) (Strongylocentrotus purpuratus (Purple sea urchin)).